The sequence spans 709 residues: Elongation factor G (709 aa).

Residues 6 to 295 enclose the tr-type G domain; that stretch reads KFLRNIGIMA…AVCTYLPSPL (290 aa). GTP-binding positions include 15 to 22, 92 to 96, and 146 to 149; these read AHIDAGKT, DTPGH, and NKMD.

It belongs to the TRAFAC class translation factor GTPase superfamily. Classic translation factor GTPase family. EF-G/EF-2 subfamily.

The protein resides in the cytoplasm. Its function is as follows. Catalyzes the GTP-dependent ribosomal translocation step during translation elongation. During this step, the ribosome changes from the pre-translocational (PRE) to the post-translocational (POST) state as the newly formed A-site-bound peptidyl-tRNA and P-site-bound deacylated tRNA move to the P and E sites, respectively. Catalyzes the coordinated movement of the two tRNA molecules, the mRNA and conformational changes in the ribosome. This is Elongation factor G from Amoebophilus asiaticus (strain 5a2).